Here is a 215-residue protein sequence, read N- to C-terminus: Phosphatidylserine decarboxylase proenzyme (215 aa).

Catalysis depends on S183, which acts as the Schiff-base intermediate with substrate; via pyruvic acid. S183 is subject to Pyruvic acid (Ser); by autocatalysis.

The protein belongs to the phosphatidylserine decarboxylase family. PSD-A subfamily. Heterodimer of a large membrane-associated beta subunit and a small pyruvoyl-containing alpha subunit. Pyruvate serves as cofactor. In terms of processing, is synthesized initially as an inactive proenzyme. Formation of the active enzyme involves a self-maturation process in which the active site pyruvoyl group is generated from an internal serine residue via an autocatalytic post-translational modification. Two non-identical subunits are generated from the proenzyme in this reaction, and the pyruvate is formed at the N-terminus of the alpha chain, which is derived from the carboxyl end of the proenzyme. The post-translation cleavage follows an unusual pathway, termed non-hydrolytic serinolysis, in which the side chain hydroxyl group of the serine supplies its oxygen atom to form the C-terminus of the beta chain, while the remainder of the serine residue undergoes an oxidative deamination to produce ammonia and the pyruvoyl prosthetic group on the alpha chain.

Its subcellular location is the cell membrane. The catalysed reaction is a 1,2-diacyl-sn-glycero-3-phospho-L-serine + H(+) = a 1,2-diacyl-sn-glycero-3-phosphoethanolamine + CO2. It functions in the pathway phospholipid metabolism; phosphatidylethanolamine biosynthesis; phosphatidylethanolamine from CDP-diacylglycerol: step 2/2. Functionally, catalyzes the formation of phosphatidylethanolamine (PtdEtn) from phosphatidylserine (PtdSer). The protein is Phosphatidylserine decarboxylase proenzyme of Symbiobacterium thermophilum (strain DSM 24528 / JCM 14929 / IAM 14863 / T).